The chain runs to 194 residues: Small ribosomal subunit protein eS7 (194 aa).

The protein belongs to the eukaryotic ribosomal protein eS7 family.

The protein is Small ribosomal subunit protein eS7 (rps-7) of Caenorhabditis elegans.